The primary structure comprises 141 residues: Hemoglobin subunit alpha-2 (141 aa).

A Globin domain is found at 1–141; it reads VLTDAERKEV…VATVLTSKYR (141 aa). His58 is a binding site for O2. A heme b-binding site is contributed by His87.

The protein belongs to the globin family. Heterotetramer of two alpha chains and two beta chains. Red blood cells.

Its function is as follows. Involved in oxygen transport from the lung to the various peripheral tissues. In Tachyglossus aculeatus aculeatus (Southeast Australian short-beaked echidna), this protein is Hemoglobin subunit alpha-2.